The chain runs to 78 residues: Small ribosomal subunit protein bS18 (78 aa).

The protein belongs to the bacterial ribosomal protein bS18 family. As to quaternary structure, part of the 30S ribosomal subunit. Forms a tight heterodimer with protein bS6.

In terms of biological role, binds as a heterodimer with protein bS6 to the central domain of the 16S rRNA, where it helps stabilize the platform of the 30S subunit. The sequence is that of Small ribosomal subunit protein bS18 from Clostridium novyi (strain NT).